Consider the following 447-residue polypeptide: Kynurenine 3-monooxygenase (447 aa).

The protein belongs to the aromatic-ring hydroxylase family. KMO subfamily. Requires FAD as cofactor.

It catalyses the reaction L-kynurenine + NADPH + O2 + H(+) = 3-hydroxy-L-kynurenine + NADP(+) + H2O. The protein operates within cofactor biosynthesis; NAD(+) biosynthesis; quinolinate from L-kynurenine: step 1/3. In terms of biological role, catalyzes the hydroxylation of L-kynurenine (L-Kyn) to form 3-hydroxy-L-kynurenine (L-3OHKyn). Required for synthesis of quinolinic acid. In Flavobacterium psychrophilum (strain ATCC 49511 / DSM 21280 / CIP 103535 / JIP02/86), this protein is Kynurenine 3-monooxygenase.